The sequence spans 351 residues: MASRSLSYTQLLGLLSFILLLVTTTTMAVRVGVILHKPSAPTLPVFREAPAFRNGDQCGTREADQIHIAMTLDTNYLRGTMAAVLSLLQHSTCPENLSFHFLSLPHFENDLFTSIKSTFPYLNFKIYQFDPNLVRSKISKSIRQALDQPLNYARIYLADIIPSSVDRIIYLDSDLVVVDDIEKLWHVEMEGKVVAAPEYCHANFTHYFTRTFWSDPVLVKVLEGKRPCYFNTGVMVVDVNKWRKGMYTQKVEEWMTIQKQKRIYHLGSLPPFLLIFAGDIKAVNHRWNQHGLGGDNFEGRCRTLHPGPISLLHWSGKGKPWLRLDSRKPCIVDHLWAPYDLYRSSRHSLEE.

At 1 to 8 (MASRSLSY) the chain is on the cytoplasmic side. Residues 9–29 (TQLLGLLSFILLLVTTTTMAV) traverse the membrane as a helical; Signal-anchor for type II membrane protein segment. Topologically, residues 30-351 (RVGVILHKPS…YRSSRHSLEE (322 aa)) are lumenal. Residues N96 and N203 are each glycosylated (N-linked (GlcNAc...) asparagine).

This sequence belongs to the glycosyltransferase 8 family.

It localises to the golgi apparatus membrane. It functions in the pathway glycan metabolism; pectin biosynthesis. Its function is as follows. May be involved in pectin and/or xylans biosynthesis in cell walls. This Arabidopsis thaliana (Mouse-ear cress) protein is Probable galacturonosyltransferase-like 4 (GATL4).